The following is a 505-amino-acid chain: AAA-ATPase At5g17760 (505 aa).

Residues 11–27 traverse the membrane as a helical segment; the sequence is TSVFTAYASMAGYMMMI. The interval 136–155 is disordered; sequence GGGGGVGGRGGGGGRRGGMD. A compositionally biased stretch (gly residues) spans 137 to 151; sequence GGGGVGGRGGGGGRR. 260–267 contributes to the ATP binding site; it reads GPPGTGKS.

This sequence belongs to the AAA ATPase family. BCS1 subfamily. Requires Mg(2+) as cofactor.

The protein resides in the membrane. The catalysed reaction is ATP + H2O = ADP + phosphate + H(+). This chain is AAA-ATPase At5g17760, found in Arabidopsis thaliana (Mouse-ear cress).